We begin with the raw amino-acid sequence, 274 residues long: Coiled-coil domain-containing protein 28A (274 aa).

A disordered region spans residues V121–H166. The span at S122–R138 shows a compositional bias: polar residues. The stretch at K234–A263 forms a coiled coil.

The sequence is that of Coiled-coil domain-containing protein 28A (CCDC28A) from Homo sapiens (Human).